Consider the following 1154-residue polypeptide: PAN2-PAN3 deadenylation complex catalytic subunit pan2 (1154 aa).

WD repeat units follow at residues 20–59 (GLPT…RYTS), 102–145 (THDE…DKLR), and 276–315 (ATVS…HFNE). A linker region spans residues 316 to 451 (MSKEVEFADV…GARISGESED (136 aa)). In terms of domain architecture, USP spans 452-821 (DPLLKYSNVE…SPCVLAFQVR (370 aa)). The Exonuclease domain occupies 870–1048 (VALDTEFVDL…IEDARMALRL (179 aa)). A divalent metal cation contacts are provided by Asp-873, Glu-875, Asp-982, and Asp-1041. The tract at residues 1092–1154 (PGTAVTMQNN…GEFFTGSPLK (63 aa)) is disordered. Composition is skewed to polar residues over residues 1096-1109 (VTMQ…TPST) and 1132-1141 (LTPSNGTFSG).

Belongs to the peptidase C19 family. PAN2 subfamily. Forms a heterotrimer with an asymmetric homodimer of the regulatory subunit pan3 to form the poly(A)-nuclease (PAN) deadenylation complex. The cofactor is a divalent metal cation.

The protein resides in the cytoplasm. The catalysed reaction is Exonucleolytic cleavage of poly(A) to 5'-AMP.. Positively regulated by the regulatory subunit pan3. Catalytic subunit of the poly(A)-nuclease (PAN) deadenylation complex, one of two cytoplasmic mRNA deadenylases involved in mRNA turnover. PAN specifically shortens poly(A) tails of RNA and the activity is stimulated by poly(A)-binding protein pab1. PAN deadenylation is followed by rapid degradation of the shortened mRNA tails by the CCR4-NOT complex. Deadenylated mRNAs are then degraded by two alternative mechanisms, namely exosome-mediated 3'-5' exonucleolytic degradation, or deadenylation-dependent mRNA decaping and subsequent 5'-3' exonucleolytic degradation by xrn1. May also be involved in post-transcriptional maturation of mRNA poly(A) tails. This is PAN2-PAN3 deadenylation complex catalytic subunit pan2 from Emericella nidulans (strain FGSC A4 / ATCC 38163 / CBS 112.46 / NRRL 194 / M139) (Aspergillus nidulans).